The primary structure comprises 188 residues: Large ribosomal subunit protein bL35m (188 aa).

It belongs to the bacterial ribosomal protein bL35 family.

It is found in the mitochondrion. This Mus musculus (Mouse) protein is Large ribosomal subunit protein bL35m (Mrpl35).